The sequence spans 141 residues: Hemoglobin subunit alpha-A (141 aa).

One can recognise a Globin domain in the interval 1–141 (VLSASDKTNV…VAKELTAKYR (141 aa)). H58 serves as a coordination point for O2. H87 provides a ligand contact to heme b.

Belongs to the globin family. As to quaternary structure, heterotetramer of two alpha chains and two beta chains. As to expression, red blood cells.

Functionally, involved in oxygen transport from the lung to the various peripheral tissues. This chain is Hemoglobin subunit alpha-A (HBAA), found in Phalacrocorax carbo (Great cormorant).